The following is a 289-amino-acid chain: Protease HtpX homolog (289 aa).

2 helical membrane passes run 8–28 and 29–49; these read LALLAALSGLLIAISYWVIGG and SSGLIIGIGLAAVTNLLSWYQ. His132 is a binding site for Zn(2+). Glu133 is an active-site residue. His136 lines the Zn(2+) pocket. 2 helical membrane passes run 151–171 and 183–203; these read VAGAISFLAQMVSYSLWFGGI and LGVLLTVVLAPIAATIIQLAI. Glu208 serves as a coordination point for Zn(2+).

This sequence belongs to the peptidase M48B family. The cofactor is Zn(2+).

It localises to the cell inner membrane. The chain is Protease HtpX homolog from Trichormus variabilis (strain ATCC 29413 / PCC 7937) (Anabaena variabilis).